Here is a 317-residue protein sequence, read N- to C-terminus: Ribosomal RNA small subunit methyltransferase H (317 aa).

S-adenosyl-L-methionine is bound by residues 30–32 (GGH), aspartate 50, tyrosine 74, aspartate 95, and glutamine 102.

It belongs to the methyltransferase superfamily. RsmH family.

It localises to the cytoplasm. It catalyses the reaction cytidine(1402) in 16S rRNA + S-adenosyl-L-methionine = N(4)-methylcytidine(1402) in 16S rRNA + S-adenosyl-L-homocysteine + H(+). In terms of biological role, specifically methylates the N4 position of cytidine in position 1402 (C1402) of 16S rRNA. This Nitrosomonas europaea (strain ATCC 19718 / CIP 103999 / KCTC 2705 / NBRC 14298) protein is Ribosomal RNA small subunit methyltransferase H.